The following is a 153-amino-acid chain: MAPKAEKKPAAKKPAEEEPAAEKAEKAPAGKKPKAEKRLPAGKGEKGSGEGKKAGRKKGKKSVETYKIYIFKVLKQVHPDIGISSKAMSIMNSFINDIFEKLAAEAAKLARYNKKPTITSREIQTAVRLVLPGELAKHAVSEGTKAVTKFTSS.

Composition is skewed to basic and acidic residues over residues 1 to 28 and 36 to 53; these read MAPKAEKKPAAKKPAEEEPAAEKAEKAP and EKRLPAGKGEKGSGEGKK. Residues 1-60 form a disordered region; it reads MAPKAEKKPAAKKPAEEEPAAEKAEKAPAGKKPKAEKRLPAGKGEKGSGEGKKAGRKKGK. An N6-acetyllysine mark is found at K7 and K37. Residue K149 forms a Glycyl lysine isopeptide (Lys-Gly) (interchain with G-Cter in ubiquitin) linkage.

The protein belongs to the histone H2B family. The nucleosome is a histone octamer containing two molecules each of H2A, H2B, H3 and H4 assembled in one H3-H4 heterotetramer and two H2A-H2B heterodimers. The octamer wraps approximately 147 bp of DNA. Post-translationally, can be acetylated to form H2BK6ac and H2BK33ac. Monoubiquitinated by BRE1 to form H2BK143ub1 and deubiquitinated by UBP26. Required for heterochromatic histone H3 di- and trimethylation at H3K4me. May give a specific tag for epigenetic transcriptional activation.

It localises to the nucleus. It is found in the chromosome. Core component of nucleosome. Nucleosomes wrap and compact DNA into chromatin, limiting DNA accessibility to the cellular machineries which require DNA as a template. Histones thereby play a central role in transcription regulation, DNA repair, DNA replication and chromosomal stability. DNA accessibility is regulated via a complex set of post-translational modifications of histones, also called histone code, and nucleosome remodeling. This chain is Histone H2B.6 (H2B.6), found in Oryza sativa subsp. japonica (Rice).